The sequence spans 133 residues: Phosphoribosyl-ATP pyrophosphatase (133 aa).

Positions 1–22 (MGKPATKPAPKPSKQQDDKKSD) are disordered.

The protein belongs to the PRA-PH family.

It is found in the cytoplasm. It carries out the reaction 1-(5-phospho-beta-D-ribosyl)-ATP + H2O = 1-(5-phospho-beta-D-ribosyl)-5'-AMP + diphosphate + H(+). It functions in the pathway amino-acid biosynthesis; L-histidine biosynthesis; L-histidine from 5-phospho-alpha-D-ribose 1-diphosphate: step 2/9. This Gluconobacter oxydans (strain 621H) (Gluconobacter suboxydans) protein is Phosphoribosyl-ATP pyrophosphatase.